Reading from the N-terminus, the 239-residue chain is Uridylate kinase (239 aa).

10 to 13 contributes to the ATP binding site; sequence KISG. Positions 18–23 are involved in allosteric activation by GTP; sequence GEAGFG. A UMP-binding site is contributed by G52. The ATP site is built by G53 and R57. UMP contacts are provided by residues D72 and 133–140; that span reads TGNPYFST. The ATP site is built by N161, Y167, and D170.

It belongs to the UMP kinase family. Homohexamer.

Its subcellular location is the cytoplasm. It catalyses the reaction UMP + ATP = UDP + ADP. Its pathway is pyrimidine metabolism; CTP biosynthesis via de novo pathway; UDP from UMP (UMPK route): step 1/1. Allosterically activated by GTP. Inhibited by UTP. Functionally, catalyzes the reversible phosphorylation of UMP to UDP. This is Uridylate kinase from Lacticaseibacillus paracasei (strain ATCC 334 / BCRC 17002 / CCUG 31169 / CIP 107868 / KCTC 3260 / NRRL B-441) (Lactobacillus paracasei).